The following is a 401-amino-acid chain: All trans-polyprenyl-diphosphate synthase PDSS2 (401 aa).

This sequence belongs to the FPP/GGPP synthase family. Heterotetramer composed of 2 PDSS1/DPS1 and 2 PDSS2/DLP1 subunits.

The protein resides in the mitochondrion. The catalysed reaction is 7 isopentenyl diphosphate + (2E,6E)-farnesyl diphosphate = all-trans-decaprenyl diphosphate + 7 diphosphate. It carries out the reaction 6 isopentenyl diphosphate + (2E,6E)-farnesyl diphosphate = all-trans-nonaprenyl diphosphate + 6 diphosphate. It functions in the pathway cofactor biosynthesis; ubiquinone biosynthesis. Heterotetrameric enzyme that catalyzes the condensation of farnesyl diphosphate (FPP), which acts as a primer, and isopentenyl diphosphate (IPP) to produce prenyl diphosphates of varying chain lengths and participates in the determination of the side chain of ubiquinone. Supplies nona and decaprenyl diphosphate, the precursors for the side chain of the isoprenoid quinones ubiquinone-9 (Q9) and ubiquinone-10 (Q10) respectively. The enzyme adds isopentenyl diphosphate molecules sequentially to farnesyl diphosphate with trans stereochemistry. May play a role during cerebellar development. May regulate mitochondrial respiratory chain function. The protein is All trans-polyprenyl-diphosphate synthase PDSS2 of Mus musculus (Mouse).